Here is a 335-residue protein sequence, read N- to C-terminus: Taste receptor type 2 member 119 (335 aa).

Topologically, residues 1-7 (MMEGHML) are extracellular. A helical membrane pass occupies residues 8–28 (FFLLVVVVQFLTGVLANGLIV). Residues 29–43 (VVNAIDLIMWKKMAP) lie on the Cytoplasmic side of the membrane. Residues 44–64 (LDLLLFCLATSRIILQLCILF) traverse the membrane as a helical segment. Over 65–81 (AQLGLSCLVRHTLFADN) the chain is Extracellular. N-linked (GlcNAc...) asparagine glycosylation is present at asparagine 81. A helical transmembrane segment spans residues 82-102 (VTFVYIINELSLWFATWLGVF). Over 103-124 (YCAKIATIPHPLFLWLKMRISR) the chain is Cytoplasmic. Residues 125 to 145 (LVPWLILASVVYVTVTTFIHS) form a helical membrane-spanning segment. Residues 146-176 (RETSELPKQIFISFFSKNTTRVRPAHATLLS) lie on the Extracellular side of the membrane. A glycan (N-linked (GlcNAc...) asparagine) is linked at asparagine 163. A helical transmembrane segment spans residues 177-197 (VFVFGLTLPFLIFTVAVLLLL). The Cytoplasmic portion of the chain corresponds to 198–224 (SSLWNHSRQMRTMVGTREPSRHALVSA). A helical membrane pass occupies residues 225 to 245 (MLSILSFLILYLSHDMVAVLI). At 246 to 256 (CTQGLHFGSRT) the chain is on the extracellular side. A helical membrane pass occupies residues 257–277 (FAFCLLVIGMYPSLHSIVLIL). Residues 278 to 335 (GNPKLKRNAKTFIVHCKCCHCARAWVTSRNPRLSDLPVPATHHSANKTSCSEACIMPS) lie on the Cytoplasmic side of the membrane.

The protein belongs to the G-protein coupled receptor T2R family. As to expression, expressed in subsets of taste receptor cells of the tongue and palate epithelium and exclusively in gustducin-positive cells. Expressed in 15% taste bud cells in circumvallate and foliate papillae but only in 2% in fungiform papillae. Expressed in the gastro and duodenal tissue. Not expressed in colon, liver, heart and kidney.

It is found in the membrane. Its function is as follows. Gustducin-coupled receptor implicated in the perception of bitter compounds in the oral cavity and the gastrointestinal tract. Signals through PLCB2 and the calcium-regulated cation channel TRPM5. The sequence is that of Taste receptor type 2 member 119 (Tas2r119) from Mus musculus (Mouse).